We begin with the raw amino-acid sequence, 73 residues long: UPF0154 protein MG335.1 homolog (73 aa).

A helical membrane pass occupies residues 6–26 (LALGLGIPLSLLVGVIIGYFI).

Belongs to the UPF0154 family.

The protein localises to the membrane. The sequence is that of UPF0154 protein MG335.1 homolog from Mycoplasma pneumoniae (strain ATCC 29342 / M129 / Subtype 1) (Mycoplasmoides pneumoniae).